We begin with the raw amino-acid sequence, 166 residues long: Phosphopantetheine adenylyltransferase (166 aa).

Thr-9 contributes to the substrate binding site. ATP contacts are provided by residues 9 to 10 (TF) and His-17. 3 residues coordinate substrate: Lys-41, Leu-78, and Arg-92. Residues 93-95 (GLR), Glu-103, and 128-134 (HQAIASK) each bind ATP.

This sequence belongs to the bacterial CoaD family. As to quaternary structure, homohexamer. The cofactor is Mg(2+).

It is found in the cytoplasm. The enzyme catalyses (R)-4'-phosphopantetheine + ATP + H(+) = 3'-dephospho-CoA + diphosphate. It functions in the pathway cofactor biosynthesis; coenzyme A biosynthesis; CoA from (R)-pantothenate: step 4/5. Reversibly transfers an adenylyl group from ATP to 4'-phosphopantetheine, yielding dephospho-CoA (dPCoA) and pyrophosphate. This chain is Phosphopantetheine adenylyltransferase, found in Roseobacter denitrificans (strain ATCC 33942 / OCh 114) (Erythrobacter sp. (strain OCh 114)).